Reading from the N-terminus, the 262-residue chain is 2-keto-4-pentenoate hydratase (262 aa).

It belongs to the hydratase/decarboxylase family. MhpD subfamily. Requires a divalent metal cation as cofactor.

It carries out the reaction (S)-4-hydroxy-2-oxopentanoate = (2Z)-2-hydroxypenta-2,4-dienoate + H2O. The protein operates within aromatic compound metabolism; 3-phenylpropanoate degradation. Functionally, catalyzes the conversion of 2-hydroxypentadienoic acid (enolic form of 2-oxopent-4-enoate) to 4-hydroxy-2-ketopentanoic acid. The polypeptide is 2-keto-4-pentenoate hydratase (Paraburkholderia phymatum (strain DSM 17167 / CIP 108236 / LMG 21445 / STM815) (Burkholderia phymatum)).